Here is a 443-residue protein sequence, read N- to C-terminus: Carbohydrate sulfotransferase 9 (443 aa).

The Cytoplasmic portion of the chain corresponds to 1-12 (MQPSEMVMNPKQ). A helical; Signal-anchor for type II membrane protein transmembrane segment spans residues 13–33 (VFLSVLIFGVAGLLLFMYLQV). Over 34–443 (WIEEQHTGRV…LMFNYTTPFL (410 aa)) the chain is Lumenal. A compositionally biased stretch (polar residues) spans 108–128 (LTKTSHSQGGDQALSKSTGSP). The segment at 108–132 (LTKTSHSQGGDQALSKSTGSPTEKL) is disordered. A glycan (N-linked (GlcNAc...) asparagine) is linked at asparagine 159. 220–226 (PKAGCSN) is a 3'-phosphoadenylyl sulfate binding site. Residue asparagine 243 is glycosylated (N-linked (GlcNAc...) asparagine). 280 to 288 (RDPMERLVS) provides a ligand contact to 3'-phosphoadenylyl sulfate. N-linked (GlcNAc...) asparagine glycosylation is found at asparagine 324 and asparagine 437.

It belongs to the sulfotransferase 2 family. As to expression, highly expressed in trachea. Also expressed in fetal lung, adult pancreas, testis and salivary gland. Expressed at low level in pituitary gland, apex of the heart, adult lung, prostate and mammary gland. Weakly or not expressed in heart, liver and spinal cord.

Its subcellular location is the golgi apparatus membrane. It is found in the secreted. Functionally, catalyzes the transfer of sulfate to position 4 of non-reducing N-acetylgalactosamine (GalNAc) residues in both N-glycans and O-glycans. Participates in biosynthesis of glycoprotein hormones lutropin and thyrotropin, by mediating sulfation of their carbohydrate structures. Has a higher activity toward carbonic anhydrase VI than toward lutropin. Only active against terminal GalNAcbeta1,GalNAcbeta. Isoform 2, but not isoform 1, is active toward chondroitin. In Homo sapiens (Human), this protein is Carbohydrate sulfotransferase 9 (CHST9).